Consider the following 353-residue polypeptide: Guanine nucleotide-binding protein subunit alpha (353 aa).

Positions 1-21 (MGCGMSTEEKEGKARNEEIEN) are disordered. The N-myristoyl glycine moiety is linked to residue Gly-2. The S-palmitoyl cysteine moiety is linked to residue Cys-3. Residues 7–21 (TEEKEGKARNEEIEN) are compositionally biased toward basic and acidic residues. Residues 32 to 353 (NEIKMLLLGA…QENLRLCGLI (322 aa)) form the G-alpha domain. A G1 motif region spans residues 35-48 (KMLLLGAGESGKST). Residues Glu-43, Ser-44, Gly-45, Lys-46, Ser-47, Thr-48, Asp-150, Leu-175, Thr-181, Gly-203, Asn-269, Lys-270, Asp-272, and Ala-325 each contribute to the GTP site. Ser-47 provides a ligand contact to Mg(2+). The segment at 173–181 (DVLRSRVKT) is G2 motif. Residue Thr-181 participates in Mg(2+) binding. Residues 196–205 (YRMFDVGGQR) form a G3 motif region. The tract at residues 265-272 (ILFLNKID) is G4 motif. Residues 323–328 (TCATDT) form a G5 motif region.

It belongs to the G-alpha family. G(q) subfamily. In terms of assembly, g proteins are composed of 3 units; alpha, beta and gamma. The alpha chain contains the guanine nucleotide binding site. Mg(2+) is required as a cofactor.

Functionally, guanine nucleotide-binding proteins (G proteins) are involved as modulators or transducers in various transmembrane signaling systems. Plays a role in pathogenicity, specifically in appressorium formation in rice blast disease. Also involved in mating. The chain is Guanine nucleotide-binding protein subunit alpha (MAGB) from Pyricularia oryzae (strain 70-15 / ATCC MYA-4617 / FGSC 8958) (Rice blast fungus).